The chain runs to 194 residues: MNLIPMVVQQDGRGERAYDIYSRLLKDRIIFLGTPIDDEVANLIIAQLLFLESEDPDKEIFFYLNTPGGHISSGMAIYDTMRYIKPPVATVCVGQAASMGALLLAAGEQGKRSALPHSRILIHQPLGGFQGQATDIDIQAREILRLKDELSLILADLTNQPLDRIKTDTERDYYMTSQQAKEYGIIDEIIVKRS.

The active-site Nucleophile is the S98. H123 is an active-site residue.

The protein belongs to the peptidase S14 family. In terms of assembly, fourteen ClpP subunits assemble into 2 heptameric rings which stack back to back to give a disk-like structure with a central cavity, resembling the structure of eukaryotic proteasomes.

The protein localises to the cytoplasm. It carries out the reaction Hydrolysis of proteins to small peptides in the presence of ATP and magnesium. alpha-casein is the usual test substrate. In the absence of ATP, only oligopeptides shorter than five residues are hydrolyzed (such as succinyl-Leu-Tyr-|-NHMec, and Leu-Tyr-Leu-|-Tyr-Trp, in which cleavage of the -Tyr-|-Leu- and -Tyr-|-Trp bonds also occurs).. Cleaves peptides in various proteins in a process that requires ATP hydrolysis. Has a chymotrypsin-like activity. Plays a major role in the degradation of misfolded proteins. This is ATP-dependent Clp protease proteolytic subunit from Syntrophus aciditrophicus (strain SB).